The sequence spans 377 residues: 2-iminoacetate synthase (377 aa).

Residues 71 to 301 form the Radical SAM core domain; the sequence is NTVSFYVPLY…PEIELSLSTR (231 aa). Residues Cys85, Cys89, and Cys92 each contribute to the [4Fe-4S] cluster site.

This sequence belongs to the radical SAM superfamily. ThiH family. As to quaternary structure, forms a heterodimer with ThiG. Requires [4Fe-4S] cluster as cofactor.

It carries out the reaction L-tyrosine + S-adenosyl-L-methionine + NADPH = 2-iminoacetate + 4-methylphenol + 5'-deoxyadenosine + L-methionine + NADP(+). Its pathway is cofactor biosynthesis; thiamine diphosphate biosynthesis. Its function is as follows. Catalyzes the radical-mediated cleavage of tyrosine to 2-iminoacetate and 4-cresol. This Escherichia coli (strain K12) protein is 2-iminoacetate synthase (thiH).